The chain runs to 274 residues: F-box protein SKIP5 (274 aa).

Residues 32–79 (LTSLNNLDDGCLMHILSFLSPIPDRYNTALVCHRWRYLACHPRLWLRV) enclose the F-box domain.

As to quaternary structure, part of a SCF (SKP1-cullin-F-box) protein ligase complex. Interacts with SKP1A/ASK1.

It functions in the pathway protein modification; protein ubiquitination. The sequence is that of F-box protein SKIP5 (SKIP5) from Arabidopsis thaliana (Mouse-ear cress).